The chain runs to 364 residues: Glycerophosphodiester phosphodiesterase (364 aa).

Positions 1-18 (MKLKTLALSLLAAGVLAG) are cleaved as a signal peptide. C19 carries N-palmitoyl cysteine lipidation. C19 is lipidated: S-diacylglycerol cysteine. The 326-residue stretch at 35–360 (KIIIAHRGAS…DFPDTGVEFL (326 aa)) folds into the GP-PDE domain. The Proton acceptor role is filled by H40. Positions 67 and 69 each coordinate Ca(2+). Catalysis depends on H82, which acts as the Proton donor. E175 contributes to the Ca(2+) binding site.

The protein belongs to the glycerophosphoryl diester phosphodiesterase family. Ca(2+) serves as cofactor. Post-translationally, contains both ester- and amide-linked fatty acids.

It localises to the cell outer membrane. The catalysed reaction is a sn-glycero-3-phosphodiester + H2O = an alcohol + sn-glycerol 3-phosphate + H(+). Its function is as follows. Glycerophosphodiester phosphodiesterase hydrolyzes glycerophosphodiesters into glycerol-3-phosphate (G3P) and the corresponding alcohol. Has a specific affinity for human immunoglobulin D myeloma protein. The sequence is that of Glycerophosphodiester phosphodiesterase (glpQ) from Haemophilus influenzae (strain ATCC 51907 / DSM 11121 / KW20 / Rd).